A 339-amino-acid chain; its full sequence is DNA-directed RNA polymerase subunit alpha (339 aa).

The segment at 1–233 is alpha N-terminal domain (alpha-NTD); sequence MVREEVAGST…DLFLPFLHAE (233 aa). Residues 266-339 are alpha C-terminal domain (alpha-CTD); the sequence is GIPLNCIFID…MDLLKNKLSF (74 aa).

This sequence belongs to the RNA polymerase alpha chain family. In terms of assembly, in plastids the minimal PEP RNA polymerase catalytic core is composed of four subunits: alpha, beta, beta', and beta''. When a (nuclear-encoded) sigma factor is associated with the core the holoenzyme is formed, which can initiate transcription.

The protein localises to the plastid. It localises to the chloroplast. The catalysed reaction is RNA(n) + a ribonucleoside 5'-triphosphate = RNA(n+1) + diphosphate. Functionally, DNA-dependent RNA polymerase catalyzes the transcription of DNA into RNA using the four ribonucleoside triphosphates as substrates. This chain is DNA-directed RNA polymerase subunit alpha, found in Agrostis stolonifera (Creeping bentgrass).